The sequence spans 242 residues: MSLTLLPAVDVRDGKAVRLRQGESGSETDYGSPLDAARTWVDAGAQWIHLVDLDAAFGTGDNRAQLREIVRQLGDKVNIEMSGGVRDDASLDAALDAGAARVNIGTAALENPEWTARVIDKYGDKVAVGLDVRGHTLAARGWVKEGGGLFETMRFLDDAGCSRYVVTDVTRDGMMSGPNIDLLREVAERTDARVTASGGISKLDDLRAIKELLPLGVDSAILGKSLYAGAFTLEEALAVANA.

Catalysis depends on Asp10, which acts as the Proton acceptor. Residue Asp131 is the Proton donor of the active site.

It belongs to the HisA/HisF family.

The protein localises to the cytoplasm. The catalysed reaction is 1-(5-phospho-beta-D-ribosyl)-5-[(5-phospho-beta-D-ribosylamino)methylideneamino]imidazole-4-carboxamide = 5-[(5-phospho-1-deoxy-D-ribulos-1-ylimino)methylamino]-1-(5-phospho-beta-D-ribosyl)imidazole-4-carboxamide. It functions in the pathway amino-acid biosynthesis; L-histidine biosynthesis; L-histidine from 5-phospho-alpha-D-ribose 1-diphosphate: step 4/9. This Bifidobacterium animalis subsp. lactis (strain AD011) protein is 1-(5-phosphoribosyl)-5-[(5-phosphoribosylamino)methylideneamino] imidazole-4-carboxamide isomerase.